Here is a 494-residue protein sequence, read N- to C-terminus: MGRLVEAIIASILLSLCFTITKSAPKSALITNLPGFNGTFPSKHYAGYVAIDKHRNKNLWYYFVESERNASVDPVVLWLNGGPGCSSMDGFVYEHGPFNFEPKKKNSHLLHLNPYSWSKVSNIIYLDSPVGVGFSYSNDNADYTTDDTKTASDTHTFLLEWFKMFPEFQSNPFFISGESYAGIYVPTLAAEVVKGHKNVTKPVINFKGYLVGNGVTDEVFDGNALVPFTHGMGLISDELYEETKLVCNGTYYTGGQSGVSKECAGKLKTVSDTVNLLNLYNILEPCYHGTSLSALDIEFLPKSLLTLGKTEKPMAVRKRMFGRAWPLGAVVRPGIVPSWSQLLAGFGVPCIDDTVATKWLNDPAVRKAVHAKEEKAIGNWELCSSNLEYRHDTGSMIEYHRNLTLSGFRALIFSGDHDMCVPYTGSEAWTKAMGYKVVDEWRPWMSNNQVAGFTQGYANNLTFLTIKGAGHTVPEYKPRESLDFYSRFLAGEKI.

The first 23 residues, 1–23 (MGRLVEAIIASILLSLCFTITKS), serve as a signal peptide directing secretion. N-linked (GlcNAc...) asparagine glycans are attached at residues N37 and N69. 3 cysteine pairs are disulfide-bonded: C85–C383, C247–C263, and C286–C350. Residue S179 is part of the active site. 2 N-linked (GlcNAc...) asparagine glycosylation sites follow: N198 and N248. An N-linked (GlcNAc...) asparagine glycan is attached at N402. D418 is a catalytic residue. N-linked (GlcNAc...) asparagine glycosylation is present at N460. H471 is an active-site residue.

Belongs to the peptidase S10 family. In terms of tissue distribution, expressed in flowers and siliques.

It localises to the secreted. Probable carboxypeptidase. The sequence is that of Serine carboxypeptidase-like 21 (SCPL21) from Arabidopsis thaliana (Mouse-ear cress).